The sequence spans 205 residues: Methylamine utilization protein MauD (205 aa).

The helical transmembrane segment at 5 to 25 (FLIASNVLLWLALIGCAVLML) threads the bilayer. The region spanning 50-184 (PDVGDAAPTF…LESLLEADKS (135 aa)) is the Thioredoxin domain.

Its subcellular location is the membrane. Its pathway is one-carbon metabolism; methylamine degradation. Functionally, may be specifically involved in the processing, transport, and/or maturation of the MADH beta-subunit. The polypeptide is Methylamine utilization protein MauD (mauD) (Methylorubrum extorquens (strain ATCC 14718 / DSM 1338 / JCM 2805 / NCIMB 9133 / AM1) (Methylobacterium extorquens)).